Here is a 188-residue protein sequence, read N- to C-terminus: Pyridoxal 5'-phosphate synthase subunit PdxT (188 aa).

46–48 (GES) contacts L-glutamine. The active-site Nucleophile is the Cys-78. L-glutamine contacts are provided by residues Arg-105 and 134–135 (IR). Residues His-170 and Glu-172 each act as charge relay system in the active site.

This sequence belongs to the glutaminase PdxT/SNO family. In terms of assembly, in the presence of PdxS, forms a dodecamer of heterodimers. Only shows activity in the heterodimer.

It carries out the reaction aldehydo-D-ribose 5-phosphate + D-glyceraldehyde 3-phosphate + L-glutamine = pyridoxal 5'-phosphate + L-glutamate + phosphate + 3 H2O + H(+). The catalysed reaction is L-glutamine + H2O = L-glutamate + NH4(+). It participates in cofactor biosynthesis; pyridoxal 5'-phosphate biosynthesis. Its function is as follows. Catalyzes the hydrolysis of glutamine to glutamate and ammonia as part of the biosynthesis of pyridoxal 5'-phosphate. The resulting ammonia molecule is channeled to the active site of PdxS. The polypeptide is Pyridoxal 5'-phosphate synthase subunit PdxT (Thermotoga sp. (strain RQ2)).